Here is a 285-residue protein sequence, read N- to C-terminus: GPN-loop GTPase 3 (285 aa).

Position 13-18 (glycine 13–threonine 18) interacts with GTP. A Gly-Pro-Asn (GPN)-loop; involved in dimer interface motif is present at residues glycine 72–asparagine 74. Threonine 174–aspartate 177 is a binding site for GTP. A disordered region spans residues glutamate 262–serine 285.

The protein belongs to the GPN-loop GTPase family. In terms of assembly, heterodimer with gpn1. Binds to RNA polymerase II (RNAPII).

Functionally, small GTPase required for proper localization of RNA polymerase II (RNAPII). May act at an RNAP assembly step prior to nuclear import. The chain is GPN-loop GTPase 3 from Danio rerio (Zebrafish).